Here is a 558-residue protein sequence, read N- to C-terminus: Formate--tetrahydrofolate ligase (558 aa).

67–74 (TPAGEGKT) serves as a coordination point for ATP.

The protein belongs to the formate--tetrahydrofolate ligase family.

It carries out the reaction (6S)-5,6,7,8-tetrahydrofolate + formate + ATP = (6R)-10-formyltetrahydrofolate + ADP + phosphate. The protein operates within one-carbon metabolism; tetrahydrofolate interconversion. The polypeptide is Formate--tetrahydrofolate ligase (Sphingobium sp. (strain NBRC 103272 / SYK-6)).